The following is a 450-amino-acid chain: Phosphoglucosamine mutase (450 aa).

Serine 100 serves as the catalytic Phosphoserine intermediate. 4 residues coordinate Mg(2+): serine 100, aspartate 240, aspartate 242, and aspartate 244. Phosphoserine is present on serine 100.

It belongs to the phosphohexose mutase family. It depends on Mg(2+) as a cofactor. Activated by phosphorylation.

The enzyme catalyses alpha-D-glucosamine 1-phosphate = D-glucosamine 6-phosphate. Functionally, catalyzes the conversion of glucosamine-6-phosphate to glucosamine-1-phosphate. This Desulforudis audaxviator (strain MP104C) protein is Phosphoglucosamine mutase.